Here is a 262-residue protein sequence, read N- to C-terminus: Kallikrein-1 (262 aa).

Residues 1–18 (MWFLVLCLALSLGGTGAA) form the signal peptide. Residues 19–24 (PPIQSR) constitute a propeptide, activation peptide. Residues 25–259 (IVGGWECEQH…YVKWIEDTIA (235 aa)) form the Peptidase S1 domain. Disulfide bonds link Cys-31-Cys-174, Cys-50-Cys-66, Cys-153-Cys-220, Cys-185-Cys-199, and Cys-210-Cys-235. His-65 serves as the catalytic Charge relay system. An O-linked (GalNAc...) serine glycan is attached at Ser-93. An N-linked (GlcNAc...) asparagine glycan is attached at Asn-102. Ser-104 carries O-linked (GalNAc...) serine glycosylation. Asn-108 carries an N-linked (GlcNAc...) asparagine glycan. Residue Asp-120 is the Charge relay system of the active site. A glycan (N-linked (GlcNAc...) asparagine; partial) is linked at Asn-165. An O-linked (GalNAc...) serine glycan is attached at Ser-167. The active-site Charge relay system is the Ser-214.

This sequence belongs to the peptidase S1 family. Kallikrein subfamily. Post-translationally, the O-linked polysaccharides on Ser-93, Ser-104 and Ser-167 are probably the mucin type linked to GalNAc. In PubMed:3163150, GalNAc was detected with the corresponding peptides but not located. Isoform 2 is expressed in pancreas, salivary glands, kidney, colon, prostate gland, testis, spleen and the colon adenocarcinoma cell line T84.

It catalyses the reaction Preferential cleavage of Arg-|-Xaa bonds in small molecule substrates. Highly selective action to release kallidin (lysyl-bradykinin) from kininogen involves hydrolysis of Met-|-Xaa or Leu-|-Xaa.. Functionally, glandular kallikreins cleave Met-Lys and Arg-Ser bonds in kininogen to release Lys-bradykinin. In terms of biological role, (Microbial infection) Cleaves Neisseria meningitidis NHBA in saliva; Neisseria is an obligate commensal of the nasopharyngeal mucosa. The chain is Kallikrein-1 (KLK1) from Homo sapiens (Human).